The sequence spans 692 residues: Glycogen phosphorylase (692 aa).

Lysine 586 bears the N6-(pyridoxal phosphate)lysine mark.

Belongs to the glycogen phosphorylase family. The cofactor is pyridoxal 5'-phosphate.

The enzyme catalyses [(1-&gt;4)-alpha-D-glucosyl](n) + phosphate = [(1-&gt;4)-alpha-D-glucosyl](n-1) + alpha-D-glucose 1-phosphate. Functionally, phosphorylase is an important allosteric enzyme in carbohydrate metabolism. Enzymes from different sources differ in their regulatory mechanisms and in their natural substrates. However, all known phosphorylases share catalytic and structural properties. The chain is Glycogen phosphorylase (glgP) from Aquifex aeolicus (strain VF5).